The sequence spans 686 residues: Pentatricopeptide repeat-containing protein 1, mitochondrial (686 aa).

Residues 55-67 (RMSSLCSDSSTPV) are compositionally biased toward polar residues. The tract at residues 55 to 79 (RMSSLCSDSSTPVAPQEEEEEESFG) is disordered. 5 PPR repeats span residues 124-160 (TPYW…RLQP), 161-195 (LECN…DLEP), 196-234 (SDAT…NFQL), 235-269 (NLKT…GHAV), and 270-306 (TEET…GIKP). A disordered region spans residues 383-407 (KLEGPPAFPEARETSRTQPEVETKA). Basic and acidic residues predominate over residues 392–407 (EARETSRTQPEVETKA). PPR repeat units follow at residues 508 to 542 (DITF…GIVP) and 575 to 609 (NTHI…SVPV).

This sequence belongs to the PTCD1 family. In terms of assembly, associates with mitochondrial leucine tRNAs. Interacts with ELAC2.

It localises to the mitochondrion matrix. Mitochondrial protein implicated in negative regulation of leucine tRNA levels, as well as negative regulation of mitochondria-encoded proteins and COX activity. Also affects the 3'-processing of mitochondrial tRNAs. In Rattus norvegicus (Rat), this protein is Pentatricopeptide repeat-containing protein 1, mitochondrial (Ptcd1).